The sequence spans 560 residues: Membrane protein insertase YidC (560 aa).

The helical transmembrane segment at 1–21 (MDIKRTILIAALAVVSYVMVL) threads the bilayer. The interval 42–66 (VAPGLPDGVPAGNNGASADVPSANA) is disordered. Transmembrane regions (helical) follow at residues 341–361 (LELTVDYGFLWFIAQPIFWLL), 367–387 (LLGNWGWSIIVLTMLIKGLFF), 437–457 (LGGCLPILVQMPVFLALYWVL), 468–488 (WILWITDLSIKDPFFILPIIM), and 515–535 (PIIFTFFFLWFPAGLVLYWVV).

It belongs to the OXA1/ALB3/YidC family. Type 1 subfamily. As to quaternary structure, interacts with the Sec translocase complex via SecD. Specifically interacts with transmembrane segments of nascent integral membrane proteins during membrane integration.

The protein localises to the cell inner membrane. In terms of biological role, required for the insertion and/or proper folding and/or complex formation of integral membrane proteins into the membrane. Involved in integration of membrane proteins that insert both dependently and independently of the Sec translocase complex, as well as at least some lipoproteins. Aids folding of multispanning membrane proteins. In Pseudomonas putida (strain ATCC 700007 / DSM 6899 / JCM 31910 / BCRC 17059 / LMG 24140 / F1), this protein is Membrane protein insertase YidC.